We begin with the raw amino-acid sequence, 188 residues long: Probable nicotinate-nucleotide adenylyltransferase (188 aa).

Belongs to the NadD family.

The catalysed reaction is nicotinate beta-D-ribonucleotide + ATP + H(+) = deamido-NAD(+) + diphosphate. It functions in the pathway cofactor biosynthesis; NAD(+) biosynthesis; deamido-NAD(+) from nicotinate D-ribonucleotide: step 1/1. In terms of biological role, catalyzes the reversible adenylation of nicotinate mononucleotide (NaMN) to nicotinic acid adenine dinucleotide (NaAD). The sequence is that of Probable nicotinate-nucleotide adenylyltransferase from Listeria welshimeri serovar 6b (strain ATCC 35897 / DSM 20650 / CCUG 15529 / CIP 8149 / NCTC 11857 / SLCC 5334 / V8).